The sequence spans 413 residues: Putative F-box protein At3g23970 (413 aa).

The F-box domain maps to 1 to 42 (MNIPPELTFEVLVRLPLKSLARFRSVRKEWKLVIDSEFFRDC).

In Arabidopsis thaliana (Mouse-ear cress), this protein is Putative F-box protein At3g23970.